The primary structure comprises 328 residues: Ketol-acid reductoisomerase (NADP(+)) (328 aa).

One can recognise a KARI N-terminal Rossmann domain in the interval 2–182; that stretch reads AKIYTDREAS…GATRAGVIET (181 aa). NADP(+) is bound by residues 25-28, Arg48, Ser53, and 83-86; these read YGIQ and DMEQ. His108 is an active-site residue. Gly134 lines the NADP(+) pocket. Residues 183–328 enclose the KARI C-terminal knotted domain; the sequence is TFAEETETDL…EEMRKLLFGP (146 aa). The Mg(2+) site is built by Asp191, Glu195, Glu227, and Glu231. Ser252 lines the substrate pocket.

This sequence belongs to the ketol-acid reductoisomerase family. The cofactor is Mg(2+).

The enzyme catalyses (2R)-2,3-dihydroxy-3-methylbutanoate + NADP(+) = (2S)-2-acetolactate + NADPH + H(+). The catalysed reaction is (2R,3R)-2,3-dihydroxy-3-methylpentanoate + NADP(+) = (S)-2-ethyl-2-hydroxy-3-oxobutanoate + NADPH + H(+). It functions in the pathway amino-acid biosynthesis; L-isoleucine biosynthesis; L-isoleucine from 2-oxobutanoate: step 2/4. It participates in amino-acid biosynthesis; L-valine biosynthesis; L-valine from pyruvate: step 2/4. Functionally, involved in the biosynthesis of branched-chain amino acids (BCAA). Catalyzes an alkyl-migration followed by a ketol-acid reduction of (S)-2-acetolactate (S2AL) to yield (R)-2,3-dihydroxy-isovalerate. In the isomerase reaction, S2AL is rearranged via a Mg-dependent methyl migration to produce 3-hydroxy-3-methyl-2-ketobutyrate (HMKB). In the reductase reaction, this 2-ketoacid undergoes a metal-dependent reduction by NADPH to yield (R)-2,3-dihydroxy-isovalerate. The protein is Ketol-acid reductoisomerase (NADP(+)) of Pyrobaculum aerophilum (strain ATCC 51768 / DSM 7523 / JCM 9630 / CIP 104966 / NBRC 100827 / IM2).